A 358-amino-acid polypeptide reads, in one-letter code: Probable isocitrate dehydrogenase [NAD] subunit alpha, mitochondrial (358 aa).

Residues R108, R118, R139, and D226 each contribute to the substrate site. Positions 226, 250, and 254 each coordinate Mg(2+).

It belongs to the isocitrate and isopropylmalate dehydrogenases family. In terms of assembly, heterooligomer of subunits alpha, beta, and gamma in the apparent ratio of 2:1:1. Mg(2+) is required as a cofactor. Mn(2+) serves as cofactor.

The protein resides in the mitochondrion. It carries out the reaction D-threo-isocitrate + NAD(+) = 2-oxoglutarate + CO2 + NADH. The protein is Probable isocitrate dehydrogenase [NAD] subunit alpha, mitochondrial (idha-1) of Caenorhabditis elegans.